A 369-amino-acid polypeptide reads, in one-letter code: Somatostatin receptor type 2 (369 aa).

The Extracellular segment spans residues 1–43; sequence MEMSSEQLNGSQVWVSSPFDLNGSLGPSNGSNQTEPYYDMTSN. N-linked (GlcNAc...) asparagine glycans are attached at residues Asn-9, Asn-22, Asn-29, and Asn-32. A helical membrane pass occupies residues 44–67; sequence AVLTFIYFVVCVVGLCGNTLVIYV. Residues 68–78 are Cytoplasmic-facing; the sequence is ILRYAKMKTIT. The chain crosses the membrane as a helical span at residues 79–103; it reads NIYILNLAIADELFMLGLPFLAMQV. The Extracellular portion of the chain corresponds to 104 to 118; that stretch reads ALVHWPFGKAICRVV. Cys-115 and Cys-193 are joined by a disulfide. Residues 119–138 traverse the membrane as a helical segment; it reads MTVDGINQFTSIFCLTVMSI. Over 139–161 the chain is Cytoplasmic; that stretch reads DRYLAVVHPIKSAKWRRPRTAKM. The chain crosses the membrane as a helical span at residues 162–181; it reads INVAVWCVSLLVILPIMIYA. Residues 182-207 are Extracellular-facing; that stretch reads GLRSNQWGRSSCTINWPGESGAWYTG. Residues 208–229 traverse the membrane as a helical segment; it reads FIIYAFILGFLVPLTIICLCYL. The Cytoplasmic portion of the chain corresponds to 230–253; sequence FIIIKVKSSGIRVGSSKRKKSEKK. Residues 254-278 traverse the membrane as a helical segment; that stretch reads VTRMVSIVVAVFIFCWLPFYIFNVS. At 279-288 the chain is on the extracellular side; it reads SVSVAISPTP. A helical membrane pass occupies residues 289 to 303; sequence ALKGMFDFVVILTYA. Topologically, residues 304–369 are cytoplasmic; that stretch reads NSCANPILYA…LLNGDLQTSI (66 aa). The S-palmitoyl cysteine moiety is linked to residue Cys-328. Residues Ser-341, Ser-343, and Ser-348 each carry the phosphoserine modification. Phosphothreonine occurs at positions 353 and 354.

The protein belongs to the G-protein coupled receptor 1 family. Homodimer and heterodimer with SSTR3 and SSTR5. Heterodimerization with SSTR3 inactivates SSTR3 receptor function. Heterodimerization with SSTR5 is enhanced by agonist stimulation of SSTR2 and increases SSTR2 cell growth inhibition activity. Following agonist stimulation, homodimers dissociate into monomers which is required for receptor internalization. Interacts with beta-arrestin; this interaction is necessary for receptor internalization and is destabilized by heterodimerization with SSTR5 which results in increased recycling of SSTR2 to the cell surface. Interacts (via C-terminus) with SHANK1 (via PDZ domain). Phosphorylated on serine and threonine residues in response to agonist stimulation, leading to receptor desensitization and rapid internalization. Phosphorylated to a greater extent on serine than threonine residues. Threonine phosphorylation is required for arrestin binding and receptor endocytosis but is not necessary for desensitization. As to expression, cerebrum and kidney.

Its subcellular location is the cell membrane. It localises to the cytoplasm. Functionally, receptor for somatostatin-14 and -28. This receptor is coupled via pertussis toxin sensitive G proteins to inhibition of adenylyl cyclase. In addition it stimulates phosphotyrosine phosphatase and PLC via pertussis toxin insensitive as well as sensitive G proteins. Inhibits calcium entry by suppressing voltage-dependent calcium channels. Acts as the functionally dominant somatostatin receptor in pancreatic alpha- and beta-cells where it mediates the inhibitory effect of somatostatin-14 on hormone secretion. Inhibits cell growth through enhancement of MAPK1 and MAPK2 phosphorylation and subsequent up-regulation of CDKN1B. Stimulates neuronal migration and axon outgrowth and may participate in neuron development and maturation during brain development. Mediates negative regulation of insulin receptor signaling through PTPN6. Inactivates SSTR3 receptor function following heterodimerization. This chain is Somatostatin receptor type 2 (Sstr2), found in Mus musculus (Mouse).